We begin with the raw amino-acid sequence, 344 residues long: Selenide, water dikinase (344 aa).

Residue cysteine 16 is part of the active site. ATP-binding positions include lysine 19 and 47 to 49; that span reads SRD. Aspartate 50 provides a ligand contact to Mg(2+). Residues aspartate 67, aspartate 90, and 138–140 contribute to the ATP site; that span reads GHS. Residue aspartate 90 participates in Mg(2+) binding. Mg(2+) is bound at residue aspartate 226.

The protein belongs to the selenophosphate synthase 1 family. Class I subfamily. As to quaternary structure, homodimer. Mg(2+) serves as cofactor.

The catalysed reaction is hydrogenselenide + ATP + H2O = selenophosphate + AMP + phosphate + 2 H(+). Its function is as follows. Synthesizes selenophosphate from selenide and ATP. This Pseudomonas putida (strain ATCC 47054 / DSM 6125 / CFBP 8728 / NCIMB 11950 / KT2440) protein is Selenide, water dikinase.